The primary structure comprises 90 residues: MSAKNDNLFEKKLARLQEIVGALESGDLPLEKGMALYKEGATCARYCRQQLDKARHELEIWQDGQANPMSSQGHTAGEYPDDEAEEAEEA.

The tract at residues 62-90 (QDGQANPMSSQGHTAGEYPDDEAEEAEEA) is disordered. Positions 64 to 74 (GQANPMSSQGH) are enriched in polar residues. The span at 79 to 90 (YPDDEAEEAEEA) shows a compositional bias: acidic residues.

Belongs to the XseB family. Heterooligomer composed of large and small subunits.

The protein localises to the cytoplasm. The catalysed reaction is Exonucleolytic cleavage in either 5'- to 3'- or 3'- to 5'-direction to yield nucleoside 5'-phosphates.. Bidirectionally degrades single-stranded DNA into large acid-insoluble oligonucleotides, which are then degraded further into small acid-soluble oligonucleotides. The sequence is that of Exodeoxyribonuclease 7 small subunit from Desulfovibrio desulfuricans (strain ATCC 27774 / DSM 6949 / MB).